The following is a 310-amino-acid chain: uncharacterized protein (310 aa).

At methionine 1 to alanine 6 the chain is on the cytoplasmic side. The PQ-loop 1 domain occupies lysine 5–glutamine 69. A helical transmembrane segment spans residues alanine 7–isoleucine 27. Residues tyrosine 28–threonine 36 are Extracellular-facing. A helical membrane pass occupies residues glycine 37–phenylalanine 57. Over cysteine 58–lysine 61 the chain is Cytoplasmic. The helical transmembrane segment at glycine 62–valine 82 threads the bilayer. Over glutamine 83 to lysine 96 the chain is Extracellular. A helical transmembrane segment spans residues isoleucine 97–leucine 117. At tryptophan 118 to aspartate 131 the chain is on the cytoplasmic side. A helical membrane pass occupies residues leucine 132–glutamate 152. The 57-residue stretch at alanine 138–leucine 194 folds into the PQ-loop 2 domain. Over leucine 153–asparagine 164 the chain is Extracellular. The chain crosses the membrane as a helical span at residues phenylalanine 165 to glycine 185. Topologically, residues asparagine 186 to glycine 191 are cytoplasmic. Residues isoleucine 192–tryptophan 212 form a helical membrane-spanning segment. The Extracellular segment spans residues tryptophan 213 to valine 310. Serine 229 bears the Phosphoserine mark. Residues asparagine 251 and asparagine 259 are each glycosylated (N-linked (GlcNAc...) asparagine).

Its subcellular location is the cell membrane. This is an uncharacterized protein from Saccharomyces cerevisiae (strain ATCC 204508 / S288c) (Baker's yeast).